The chain runs to 119 residues: Large ribosomal subunit protein uL18 (119 aa).

The segment at 1–25 is disordered; the sequence is MITKIDKNKVRKKRHARVRSKISGT. Basic residues predominate over residues 9 to 20; it reads KVRKKRHARVRS.

The protein belongs to the universal ribosomal protein uL18 family. As to quaternary structure, part of the 50S ribosomal subunit; part of the 5S rRNA/L5/L18/L25 subcomplex. Contacts the 5S and 23S rRNAs.

This is one of the proteins that bind and probably mediate the attachment of the 5S RNA into the large ribosomal subunit, where it forms part of the central protuberance. This chain is Large ribosomal subunit protein uL18, found in Listeria innocua serovar 6a (strain ATCC BAA-680 / CLIP 11262).